We begin with the raw amino-acid sequence, 404 residues long: Aspergillopepsin-1 (404 aa).

The N-terminal stretch at 1–20 is a signal peptide; sequence MVILSKVAAVAVGLSTVASA. The propeptide at 21–77 is activation peptide; the sequence is LPTGPSHSPHARRGFTINQITRQTARVGPKTASFPAIYSRALAKYGGTVPAHLKSAV. The region spanning 95–401 is the Peptidase A1 domain; sequence YLTPVNIGGT…DSQGPRLGFA (307 aa). Asp111 is a catalytic residue. A glycan (N-linked (GlcNAc...) asparagine) is linked at Asn140. Asp293 is a catalytic residue. The cysteines at positions 329 and 364 are disulfide-linked.

It belongs to the peptidase A1 family. In terms of assembly, monomer.

The protein resides in the secreted. It catalyses the reaction Hydrolysis of proteins with broad specificity. Generally favors hydrophobic residues in P1 and P1', but also accepts Lys in P1, which leads to activation of trypsinogen. Does not clot milk.. Functionally, secreted aspartic endopeptidase that allows assimilation of proteinaceous substrates. The scissile peptide bond is attacked by a nucleophilic water molecule activated by two aspartic residues in the active site. Shows a broad primary substrate specificity. Favors hydrophobic residues at the P1 and P1' positions, but also accepts a lysine residue in the P1 position, leading to the activation of trypsinogen and chymotrypsinogen A. This Aspergillus flavus (strain ATCC 200026 / FGSC A1120 / IAM 13836 / NRRL 3357 / JCM 12722 / SRRC 167) protein is Aspergillopepsin-1 (pepA).